The chain runs to 197 residues: Small ribosomal subunit protein uS4c (197 aa).

The 60-residue stretch at 84 to 143 (MRLDNIIFQLGMASTIPAARQLVCHRHILVNHRVVDIPSYRCKPRDIISIRNRPTSANAL) folds into the S4 RNA-binding domain.

Belongs to the universal ribosomal protein uS4 family. Part of the 30S ribosomal subunit. Contacts protein S5. The interaction surface between S4 and S5 is involved in control of translational fidelity.

Its subcellular location is the plastid. The protein resides in the chloroplast. Its function is as follows. One of the primary rRNA binding proteins, it binds directly to 16S rRNA where it nucleates assembly of the body of the 30S subunit. In terms of biological role, with S5 and S12 plays an important role in translational accuracy. The sequence is that of Small ribosomal subunit protein uS4c (rps4) from Adiantum capillus-veneris (Maidenhair fern).